Reading from the N-terminus, the 176-residue chain is MRRDVPQDSVRRNEQIRAREVRLIGAEGEQLGIISRNDAIALAKEKGLDLVEVAATADPPVCRVMDYGKYKYEQQKKKQEAKKRQTVVQIKEIKVRPKTDEHDYQTKLKHVRRFLEEGDRCKVTVFFRGREIVHKDRGLTILDRFVEDTKDLAKLDQEARAEGRTLQMMLAPIPKK.

This sequence belongs to the IF-3 family. Monomer.

Its subcellular location is the cytoplasm. IF-3 binds to the 30S ribosomal subunit and shifts the equilibrium between 70S ribosomes and their 50S and 30S subunits in favor of the free subunits, thus enhancing the availability of 30S subunits on which protein synthesis initiation begins. The polypeptide is Translation initiation factor IF-3 (Nitratidesulfovibrio vulgaris (strain ATCC 29579 / DSM 644 / CCUG 34227 / NCIMB 8303 / VKM B-1760 / Hildenborough) (Desulfovibrio vulgaris)).